Reading from the N-terminus, the 394-residue chain is 4-O-methyl-glucuronoyl methylesterase (394 aa).

The N-terminal stretch at 1 to 18 (MVHLTPALLLASAAFAAA) is a signal peptide. Cystine bridges form between C29-C63, C210-C345, and C242-C317. The GXSYXG catalytic site motif signature appears at 209–214 (GCSRNG). S211 (nucleophile) is an active-site residue. Residues K215, Q257, E265, and W308 each coordinate substrate. Catalysis depends on H344, which acts as the Proton donor/acceptor.

The protein belongs to the carbohydrate esterase 15 (CE15) family.

Its subcellular location is the secreted. It catalyses the reaction a 4-O-methyl-alpha-D-glucuronosyl ester derivative + H2O = 4-O-methyl-alpha-D-glucuronate derivative + an alcohol + H(+). Functionally, glucuronoyl esterase which may play a significant role in biomass degradation, as it is considered to disconnect hemicellulose from lignin through the hydrolysis of the ester bond between 4-O-methyl-D-glucuronic acid residues of glucuronoxylans and aromatic alcohols of lignin. The protein is 4-O-methyl-glucuronoyl methylesterase of Neurospora crassa (strain ATCC 24698 / 74-OR23-1A / CBS 708.71 / DSM 1257 / FGSC 987).